The following is a 1302-amino-acid chain: Multidrug resistance protein 1 (1302 aa).

The chain crosses the membrane as a helical span at residues 43–63 (GVFEIILLIIGIIGSIGVGCL). Residues 51-360 (IIGIIGSIGV…ISTPINILNS (310 aa)) enclose the ABC transmembrane type-1 1 domain. A glycan (N-linked (GlcNAc...) asparagine) is linked at asparagine 83. 5 helical membrane-spanning segments follow: residues 118–138 (LYFA…FFVL), 192–212 (LFQT…KCWD), 213–233 (LTLV…GLGM), 292–312 (IGIG…NALG), and 331–351 (AGTV…LSQI). An ABC transporter 1 domain is found at 395–634 (IRFEDVQFVY…KGTYYGLVKR (240 aa)). 430 to 437 (GASGCGKS) is a binding site for ATP. Asparagine 663 carries an N-linked (GlcNAc...) asparagine glycan. Residues 712 to 732 (YIFCTLGLIGGIGAGAAFPFY) traverse the membrane as a helical segment. One can recognise an ABC transmembrane type-1 2 domain in the interval 713–1022 (IFCTLGLIGG…IGNVLPDVGK (310 aa)). A glycan (N-linked (GlcNAc...) asparagine) is linked at asparagine 751. The chain crosses the membrane as a helical span at residues 765-785 (MIIICIGIITMISFFCYVGLF). A glycan (N-linked (GlcNAc...) asparagine) is linked at asparagine 808. Transmembrane regions (helical) follow at residues 841–861 (VGDI…GLYF) and 862–882 (SWKL…FMFI). Residues 1057-1296 (IEFKNIHFRY…KGFYYTLAMQ (240 aa)) enclose the ABC transporter 2 domain. 1092–1099 (GASGCGKS) provides a ligand contact to ATP.

The protein belongs to the ABC transporter superfamily. ABCB family. Multidrug resistance exporter (TC 3.A.1.201) subfamily.

Its subcellular location is the membrane. It catalyses the reaction ATP + H2O + xenobioticSide 1 = ADP + phosphate + xenobioticSide 2.. In terms of biological role, energy-dependent efflux pump responsible for decreased drug accumulation in multidrug resistance parasites. In Entamoeba histolytica (strain ATCC 30459 / HM-1:IMSS / ABRM), this protein is Multidrug resistance protein 1.